The chain runs to 195 residues: SPI-2 type 3 secretion system translocon protein SctB (195 aa).

A coiled-coil region spans residues 44 to 80 (KLMELAKKLRDIMRSYNVEKQRLAWELQVNVLQTQMK). 3 helical membrane passes run 90–110 (MITAGGAMLSGVLTIGLGAVG), 115–135 (LIAGQAVGHTAGGVMGLGAGV), and 170–190 (EIMQQIIGVGSSLVTVLAEIL).

The protein belongs to the SctB/EspB family. As to quaternary structure, the core secretion machinery of the T3SS is composed of approximately 20 different proteins, including cytoplasmic components, a base, an export apparatus and a needle. This subunit is involved in the formation of a pore, called the translocon, in host membrane. May form a complex with SseB and SseC/SctE2. SseB is required for correct localization of SseD/SctB2 on the bacterial cell surface. Binds to the chaperone SseA.

Its subcellular location is the secreted. The protein localises to the cell surface. The protein resides in the host membrane. Functionally, component of the type III secretion system 2 (SPI-2 T3SS), also called injectisome, which is used to inject bacterial effector proteins into eukaryotic host cells. SseC/SctE2 and SseD/SctB2 are inserted into the host membrane where they form a pore and allow the translocation of effector proteins into the cytosol of target cells. Required for the translocation of SPI-2 effector proteins. Required for systemic Salmonella infection of the mouse. Essential for SpvB-induced actin depolymerization in the host cell cytoplasm. In Salmonella typhimurium (strain LT2 / SGSC1412 / ATCC 700720), this protein is SPI-2 type 3 secretion system translocon protein SctB.